The chain runs to 77 residues: Small integral membrane protein 5 (77 aa).

The chain crosses the membrane as a helical span at residues 32–52 (IVAFSVIILFTATVLLLLLIA).

It localises to the membrane. The sequence is that of Small integral membrane protein 5 (SMIM5) from Homo sapiens (Human).